The primary structure comprises 103 residues: Sperm-associated antigen 11B (103 aa).

A signal peptide spans 1 to 25 (MRQRLLPSVTSLLLVALLFPGSSQA). An N-linked (GlcNAc...) asparagine glycan is attached at N29.

The protein belongs to the SPAG11 family. Specifically expressed in caput and proximal corpus of epididymis (at protein level). Present in the epididymal epithelium and on the sperm surface, with a subacrosomal equatorial distribution on the sperm head (at protein level).

It is found in the secreted. In terms of biological role, has antimicrobial activity against E.coli. Plays a role in the defense response in the male reproductive tract, contributing to sperm maturation, storage and protection. This Homo sapiens (Human) protein is Sperm-associated antigen 11B.